Here is a 431-residue protein sequence, read N- to C-terminus: F-box/kelch-repeat protein At4g19930 (431 aa).

Positions 37 to 83 (HEPMPYIPFDLVIEILTRLPAKSLMRFKSVSKLWSSLICSRTFTNRL) constitute an F-box domain. Kelch repeat units lie at residues 143 to 189 (LSHV…KNKK) and 227 to 275 (WVFI…PMLV).

This Arabidopsis thaliana (Mouse-ear cress) protein is F-box/kelch-repeat protein At4g19930.